A 929-amino-acid chain; its full sequence is Protein translocase subunit SecA (929 aa).

Residues Gln87, 105-109 (GEGKT), and Asp512 each bind ATP. 4 residues coordinate Zn(2+): Cys914, Cys916, Cys925, and His926.

This sequence belongs to the SecA family. As to quaternary structure, monomer and homodimer. Part of the essential Sec protein translocation apparatus which comprises SecA, SecYEG and auxiliary proteins SecDF-YajC and YidC. Zn(2+) serves as cofactor.

The protein resides in the cell inner membrane. It localises to the cytoplasm. The catalysed reaction is ATP + H2O + cellular proteinSide 1 = ADP + phosphate + cellular proteinSide 2.. Functionally, part of the Sec protein translocase complex. Interacts with the SecYEG preprotein conducting channel. Has a central role in coupling the hydrolysis of ATP to the transfer of proteins into and across the cell membrane, serving both as a receptor for the preprotein-SecB complex and as an ATP-driven molecular motor driving the stepwise translocation of polypeptide chains across the membrane. The protein is Protein translocase subunit SecA of Psychrobacter arcticus (strain DSM 17307 / VKM B-2377 / 273-4).